Here is a 317-residue protein sequence, read N- to C-terminus: Acetyl-coenzyme A carboxylase carboxyl transferase subunit alpha (317 aa).

The region spanning 39–293 (RLESKAAAAL…GDALAEALTG (255 aa)) is the CoA carboxyltransferase C-terminal domain.

This sequence belongs to the AccA family. In terms of assembly, acetyl-CoA carboxylase is a heterohexamer composed of biotin carboxyl carrier protein (AccB), biotin carboxylase (AccC) and two subunits each of ACCase subunit alpha (AccA) and ACCase subunit beta (AccD).

The protein resides in the cytoplasm. It catalyses the reaction N(6)-carboxybiotinyl-L-lysyl-[protein] + acetyl-CoA = N(6)-biotinyl-L-lysyl-[protein] + malonyl-CoA. Its pathway is lipid metabolism; malonyl-CoA biosynthesis; malonyl-CoA from acetyl-CoA: step 1/1. In terms of biological role, component of the acetyl coenzyme A carboxylase (ACC) complex. First, biotin carboxylase catalyzes the carboxylation of biotin on its carrier protein (BCCP) and then the CO(2) group is transferred by the carboxyltransferase to acetyl-CoA to form malonyl-CoA. The chain is Acetyl-coenzyme A carboxylase carboxyl transferase subunit alpha from Methylobacterium nodulans (strain LMG 21967 / CNCM I-2342 / ORS 2060).